A 172-amino-acid chain; its full sequence is Large ribosomal subunit protein uL10 (172 aa).

The protein belongs to the universal ribosomal protein uL10 family. As to quaternary structure, part of the ribosomal stalk of the 50S ribosomal subunit. The N-terminus interacts with L11 and the large rRNA to form the base of the stalk. The C-terminus forms an elongated spine to which L12 dimers bind in a sequential fashion forming a multimeric L10(L12)X complex.

Functionally, forms part of the ribosomal stalk, playing a central role in the interaction of the ribosome with GTP-bound translation factors. The sequence is that of Large ribosomal subunit protein uL10 from Brucella suis (strain ATCC 23445 / NCTC 10510).